The sequence spans 433 residues: Probable dipeptidase (433 aa).

Cysteine 20 is a catalytic residue.

It belongs to the peptidase C69 family.

It catalyses the reaction an L-aminoacyl-L-amino acid + H2O = 2 an L-alpha-amino acid. The polypeptide is Probable dipeptidase (pipD) (Salmonella dublin).